Consider the following 549-residue polypeptide: Arginine--tRNA ligase (549 aa).

The 'HIGH' region motif lies at 132–142; it reads ANPTGPLHIGH.

Belongs to the class-I aminoacyl-tRNA synthetase family. In terms of assembly, monomer.

It is found in the cytoplasm. The catalysed reaction is tRNA(Arg) + L-arginine + ATP = L-arginyl-tRNA(Arg) + AMP + diphosphate. The sequence is that of Arginine--tRNA ligase from Paenarthrobacter aurescens (strain TC1).